The chain runs to 463 residues: Glycine--tRNA ligase (463 aa).

Residues Arg98 and Glu170 each contribute to the substrate site. ATP-binding positions include 202–204 (RNE), 212–217 (FRTREF), 287–288 (EL), and 331–334 (GIER). Residue 217–221 (FEQFE) participates in substrate binding. 327 to 331 (EPSLG) serves as a coordination point for substrate.

This sequence belongs to the class-II aminoacyl-tRNA synthetase family. As to quaternary structure, homodimer.

Its subcellular location is the cytoplasm. It carries out the reaction tRNA(Gly) + glycine + ATP = glycyl-tRNA(Gly) + AMP + diphosphate. Functionally, catalyzes the attachment of glycine to tRNA(Gly). This is Glycine--tRNA ligase from Mycoplasmoides gallisepticum (strain R(low / passage 15 / clone 2)) (Mycoplasma gallisepticum).